The chain runs to 103 residues: Large ribosomal subunit protein bL21 (103 aa).

Belongs to the bacterial ribosomal protein bL21 family. In terms of assembly, part of the 50S ribosomal subunit. Contacts protein L20.

This protein binds to 23S rRNA in the presence of protein L20. The chain is Large ribosomal subunit protein bL21 from Caldicellulosiruptor saccharolyticus (strain ATCC 43494 / DSM 8903 / Tp8T 6331).